Reading from the N-terminus, the 257-residue chain is UPF0246 protein Sbal195_1149 (257 aa).

It belongs to the UPF0246 family.

The sequence is that of UPF0246 protein Sbal195_1149 from Shewanella baltica (strain OS195).